The primary structure comprises 425 residues: MRSILVLVALIGCIAAGVYKIPLKRITPPMIKMLRAGTWETYVEGMRKRQLQLLKEHKVHIQDVLGYANMEYLGEITIGTPQQKFLVVLDTGSSNLWVPDDSCYKEKRPDRCLVSNCDAGLVCQVFCPDPKCCEHTREFKQVNACKDKHRFDQKNSNTYVKTNKTWAIAYGTGDARGFFGRDTVRLGAEGKDQLVINDTWFGQAEHIAEFFSNTFLDGILGLAFQELSEGGVAPPIIRAIDLGLLDQPIFTVYFENVGDKEGVYGGVFTWGGLDPDHCEDEVTYEQLTEATYWQFRLKGVSSKNFSSTAGWEAISDTGTSLNGAPRGILRSIARQYNGQYVASQGLYVVDCSKNVTVDVTIGDRNYTMTAKNLVLEIQADICIMAFFEMDMFIGPAWILGDPFIREYCNIHDIEKKRIGFAAVKH.

The first 16 residues, 1 to 16 (MRSILVLVALIGCIAA), serve as a signal peptide directing secretion. Residues 72–421 (YLGEITIGTP…DIEKKRIGFA (350 aa)) form the Peptidase A1 domain. Asp-90 is an active-site residue. Residues Cys-103 and Cys-145 are joined by a disulfide bond. Residues Asn-163, Asn-197, and Asn-304 are each glycosylated (N-linked (GlcNAc...) asparagine). Asp-316 is a catalytic residue. Cysteines 351 and 382 form a disulfide. N-linked (GlcNAc...) asparagine glycosylation is found at Asn-354 and Asn-365.

Belongs to the peptidase A1 family. In terms of processing, cleaved into a mature form. Expressed in intestine, amphidal glands and excretory gland (at protein level).

The protein localises to the secreted. With respect to regulation, inhibited by pepstatin A. Functionally, aspartic protease which cleaves several human serum proteins including hemoglobin, fibrinogen and albumin. Appears to cleave preferentially between P1 (Ala, Leu, Val, Phe and Gly) and P1' (Ala and Leu) residues. This is Aspartic protease 2 from Necator americanus (Human hookworm).